A 555-amino-acid polypeptide reads, in one-letter code: Urocanate hydratase (555 aa).

Residues 52 to 53 (GG), Q130, 176 to 178 (GMG), E196, R201, 242 to 243 (NA), 263 to 267 (QTSAH), 273 to 274 (YL), and Y322 each bind NAD(+). C410 is an active-site residue. G492 provides a ligand contact to NAD(+).

Belongs to the urocanase family. It depends on NAD(+) as a cofactor.

The protein localises to the cytoplasm. It carries out the reaction 4-imidazolone-5-propanoate = trans-urocanate + H2O. Its pathway is amino-acid degradation; L-histidine degradation into L-glutamate; N-formimidoyl-L-glutamate from L-histidine: step 2/3. Functionally, catalyzes the conversion of urocanate to 4-imidazolone-5-propionate. This Shewanella sp. (strain W3-18-1) protein is Urocanate hydratase.